A 92-amino-acid polypeptide reads, in one-letter code: MTKSELIERIVTQQGQLSAKDVELAIKTMLEQMSQALATGDRIEIRGFGSFSLHYRAPRVGRNPKTGQTVRLDGKFVPHFKPGKELRDRVNE.

Belongs to the bacterial histone-like protein family. In terms of assembly, heterodimer of an alpha and a beta chain.

This protein is one of the two subunits of integration host factor, a specific DNA-binding protein that functions in genetic recombination as well as in transcriptional and translational control. The protein is Integration host factor subunit beta of Azotobacter vinelandii (strain DJ / ATCC BAA-1303).